A 478-amino-acid polypeptide reads, in one-letter code: Ankyrin repeat and BTB/POZ domain-containing protein 1 (478 aa).

2 ANK repeats span residues 1–31 (MDTS…EVNV) and 35–64 (WDST…RCEA). BTB domains are found at residues 115 to 182 (SDVV…DIGV) and 272 to 346 (PDIC…ELSP). Residues 451 to 477 (VQTYSAIEEAQQRLRALEDLLVSIGLD) are a coiled coil.

Ubiquitously expressed in all fetal tissues examined including heart, brain, liver, and kidney. Also expressed at lower levels in both adult heart and hypertrophic heart.

It localises to the cytoplasm. Its function is as follows. May act as a mediator of the PTEN growth-suppressive signaling pathway. May play a role in developmental processes. The protein is Ankyrin repeat and BTB/POZ domain-containing protein 1 of Homo sapiens (Human).